We begin with the raw amino-acid sequence, 134 residues long: MPPKSRAGAVKKVRRKEKKNVAHGQAHIKSTFNNTIVSITDPTGAVISWASAGHVGFKGSRKSTPFAAQMAAENAARKAAEHGMKKVDVFVKGPGSGRETAIRSLQAAGLEVGTIQDVTPQPHNGCRPPKRRRV.

Disordered regions lie at residues 1–24 and 115–134; these read MPPK…VAHG and IQDV…RRRV. Positions 9-18 are enriched in basic residues; that stretch reads AVKKVRRKEK.

It belongs to the universal ribosomal protein uS11 family. Part of the 30S ribosomal subunit. Interacts with proteins S7 and S18. Binds to IF-3.

Its function is as follows. Located on the platform of the 30S subunit, it bridges several disparate RNA helices of the 16S rRNA. Forms part of the Shine-Dalgarno cleft in the 70S ribosome. This Saccharopolyspora erythraea (strain ATCC 11635 / DSM 40517 / JCM 4748 / NBRC 13426 / NCIMB 8594 / NRRL 2338) protein is Small ribosomal subunit protein uS11.